A 500-amino-acid chain; its full sequence is Glycerol kinase (500 aa).

Position 13 (Thr-13) interacts with ADP. 3 residues coordinate ATP: Thr-13, Thr-14, and Ser-15. Sn-glycerol 3-phosphate is bound at residue Thr-13. Arg-17 contacts ADP. Residues Arg-83, Glu-84, Tyr-135, and Asp-244 each contribute to the sn-glycerol 3-phosphate site. Positions 83, 84, 135, 244, and 245 each coordinate glycerol. Thr-266 and Gly-309 together coordinate ADP. Residues Thr-266, Gly-309, Gln-313, and Gly-410 each contribute to the ATP site. Positions 410 and 414 each coordinate ADP.

The protein belongs to the FGGY kinase family.

The catalysed reaction is glycerol + ATP = sn-glycerol 3-phosphate + ADP + H(+). Its pathway is polyol metabolism; glycerol degradation via glycerol kinase pathway; sn-glycerol 3-phosphate from glycerol: step 1/1. With respect to regulation, inhibited by fructose 1,6-bisphosphate (FBP). Key enzyme in the regulation of glycerol uptake and metabolism. Catalyzes the phosphorylation of glycerol to yield sn-glycerol 3-phosphate. In Burkholderia multivorans (strain ATCC 17616 / 249), this protein is Glycerol kinase.